The chain runs to 526 residues: GMP synthase [glutamine-hydrolyzing] (526 aa).

The Glutamine amidotransferase type-1 domain occupies 9 to 208 (RILILDFGSQ…VMDICGCETL (200 aa)). The Nucleophile role is filled by cysteine 86. Active-site residues include histidine 182 and glutamate 184. A GMPS ATP-PPase domain is found at 209–401 (WTSSSIIEDA…LGLPYEMLYR (193 aa)). 236–242 (SGGVDSS) lines the ATP pocket.

As to quaternary structure, homodimer.

The enzyme catalyses XMP + L-glutamine + ATP + H2O = GMP + L-glutamate + AMP + diphosphate + 2 H(+). It functions in the pathway purine metabolism; GMP biosynthesis; GMP from XMP (L-Gln route): step 1/1. Functionally, catalyzes the synthesis of GMP from XMP. This Psychromonas ingrahamii (strain DSM 17664 / CCUG 51855 / 37) protein is GMP synthase [glutamine-hydrolyzing].